The following is a 366-amino-acid chain: 5-hydroxytryptamine receptor 1F (366 aa).

The Extracellular portion of the chain corresponds to 1–24; the sequence is MDFLNASDQNLTSEELLNRMPSKI. N-linked (GlcNAc...) asparagine glycans are attached at residues Asn5 and Asn10. Residues 25–49 traverse the membrane as a helical segment; that stretch reads LVSLTLSGLALMTTTINSLVIAAII. Residues 50 to 59 lie on the Cytoplasmic side of the membrane; it reads VTRKLHHPAN. Residues 60–81 traverse the membrane as a helical segment; the sequence is YLICSLAVTDFLVAVLVMPFSI. The Extracellular segment spans residues 82 to 96; the sequence is VYIVRESWIMGQVLC. A disulfide bond links Cys96 and Cys172. Residues 97-119 traverse the membrane as a helical segment; the sequence is DIWLSVDIICCTCSILHLSAIAL. Serotonin is bound by residues Asp103 and Cys107. A DRY motif; important for ligand-induced conformation changes motif is present at residues 120–122; the sequence is DRY. Residues 120 to 139 lie on the Cytoplasmic side of the membrane; that stretch reads DRYRAITDAVEYARKRTPRH. A helical transmembrane segment spans residues 140–159; that stretch reads AGIMITIVWVISVFISMPPL. Over 160–178 the chain is Extracellular; sequence FWRHQGTSRDDECVIKHDH. The chain crosses the membrane as a helical span at residues 179 to 202; that stretch reads IVSTIYSTFGAFYIPLVLILILYY. Residues 203–291 are Cytoplasmic-facing; it reads KIYRAARTLY…KISGTRERKA (89 aa). A helical transmembrane segment spans residues 292-315; it reads ATTLGLILGAFVICWLPFFVKELV. Residues 316 to 327 are Extracellular-facing; the sequence is VNVCEKCKISEE. A helical transmembrane segment spans residues 328-350; it reads MSNFLAWLGYLNSLINPLIYTIF. The NPxxY motif; important for ligand-induced conformation changes and signaling motif lies at 343–347; the sequence is NPLIY. Residues 351–366 lie on the Cytoplasmic side of the membrane; the sequence is NEDFKKAFQKLVRCRY.

It belongs to the G-protein coupled receptor 1 family. As to expression, detected in hippocampus.

It localises to the cell membrane. In terms of biological role, G-protein coupled receptor for 5-hydroxytryptamine (serotonin). Also functions as a receptor for various alkaloids and psychoactive substances. Ligand binding causes a conformation change that triggers signaling via guanine nucleotide-binding proteins (G proteins) and modulates the activity of downstream effectors, such as adenylate cyclase. HTR1F is coupled to G(i)/G(o) G alpha proteins and mediates inhibitory neurotransmission by inhibiting adenylate cyclase activity. The chain is 5-hydroxytryptamine receptor 1F (Htr1f) from Mus musculus (Mouse).